The primary structure comprises 158 residues: UPF0735 ACT domain-containing protein Bsph_3944 (158 aa).

The 76-residue stretch at 80 to 155 (TVFLQLQDRK…FVESAEVISS (76 aa)) folds into the ACT domain.

The protein belongs to the UPF0735 family.

The sequence is that of UPF0735 ACT domain-containing protein Bsph_3944 from Lysinibacillus sphaericus (strain C3-41).